Reading from the N-terminus, the 574-residue chain is UvrABC system protein C (574 aa).

A GIY-YIG domain is found at 12–92 (KKPGVYIFKN…IYIHKPKYNI (81 aa)). The UVR domain occupies 200-235 (EEVKNYLQKAMMDYAKIKNYEKAAQMRDTLFKLENL).

The protein belongs to the UvrC family. In terms of assembly, interacts with UvrB in an incision complex.

The protein localises to the cytoplasm. Functionally, the UvrABC repair system catalyzes the recognition and processing of DNA lesions. UvrC both incises the 5' and 3' sides of the lesion. The N-terminal half is responsible for the 3' incision and the C-terminal half is responsible for the 5' incision. This chain is UvrABC system protein C, found in Petrotoga mobilis (strain DSM 10674 / SJ95).